The primary structure comprises 199 residues: TATA-box-binding protein (199 aa).

A run of 2 repeats spans residues 10-86 (IENI…VKLL) and 101-177 (IQNI…YNQL).

Belongs to the TBP family.

In terms of biological role, general factor that plays a role in the activation of archaeal genes transcribed by RNA polymerase. Binds specifically to the TATA box promoter element which lies close to the position of transcription initiation. The protein is TATA-box-binding protein of Pyrobaculum calidifontis (strain DSM 21063 / JCM 11548 / VA1).